We begin with the raw amino-acid sequence, 257 residues long: NAD-capped RNA hydrolase NudC (257 aa).

Residues Lys25 and Arg69 each contribute to the substrate site. Zn(2+) is bound by residues Cys98 and Cys101. Glu111 serves as a coordination point for substrate. 2 residues coordinate Zn(2+): Cys116 and Cys119. Substrate is bound at residue Tyr124. Residues 125-248 form the Nudix hydrolase domain; it reads PQIAPCIIVA…TVARRLIEDT (124 aa). Residues Ala158, Glu174, and Glu178 each coordinate a divalent metal cation. The Nudix box motif lies at 159–180; that stretch reads GFVEVGETLEQAVAREVMEESG. 192 to 199 is a binding site for substrate; that stretch reads QPWPFPQS. Residue Glu219 participates in a divalent metal cation binding. Ala241 is a binding site for substrate.

Belongs to the Nudix hydrolase family. NudC subfamily. Homodimer. Mg(2+) serves as cofactor. It depends on Mn(2+) as a cofactor. Zn(2+) is required as a cofactor.

The catalysed reaction is a 5'-end NAD(+)-phospho-ribonucleoside in mRNA + H2O = a 5'-end phospho-adenosine-phospho-ribonucleoside in mRNA + beta-nicotinamide D-ribonucleotide + 2 H(+). It carries out the reaction NAD(+) + H2O = beta-nicotinamide D-ribonucleotide + AMP + 2 H(+). It catalyses the reaction NADH + H2O = reduced beta-nicotinamide D-ribonucleotide + AMP + 2 H(+). MRNA decapping enzyme that specifically removes the nicotinamide adenine dinucleotide (NAD) cap from a subset of mRNAs by hydrolyzing the diphosphate linkage to produce nicotinamide mononucleotide (NMN) and 5' monophosphate mRNA. The NAD-cap is present at the 5'-end of some mRNAs and stabilizes RNA against 5'-processing. Has preference for mRNAs with a 5'-end purine. Catalyzes the hydrolysis of a broad range of dinucleotide pyrophosphates. The polypeptide is NAD-capped RNA hydrolase NudC (Shigella boydii serotype 18 (strain CDC 3083-94 / BS512)).